We begin with the raw amino-acid sequence, 428 residues long: Phosphoribosylamine--glycine ligase (428 aa).

One can recognise an ATP-grasp domain in the interval 109–316; sequence KDFLARHNIP…LVELCLAGTQ (208 aa). Residue 135–196 coordinates ATP; that stretch reads VRQKGAPIVI…EEFLDGEEAS (62 aa). Glu-286 and Asn-288 together coordinate Mg(2+).

It belongs to the GARS family. Mg(2+) is required as a cofactor. The cofactor is Mn(2+).

It carries out the reaction 5-phospho-beta-D-ribosylamine + glycine + ATP = N(1)-(5-phospho-beta-D-ribosyl)glycinamide + ADP + phosphate + H(+). Its pathway is purine metabolism; IMP biosynthesis via de novo pathway; N(1)-(5-phospho-D-ribosyl)glycinamide from 5-phospho-alpha-D-ribose 1-diphosphate: step 2/2. In Yersinia pestis, this protein is Phosphoribosylamine--glycine ligase.